The following is a 433-amino-acid chain: Glutamate-1-semialdehyde 2,1-aminomutase (433 aa).

Residue Lys272 is modified to N6-(pyridoxal phosphate)lysine.

This sequence belongs to the class-III pyridoxal-phosphate-dependent aminotransferase family. HemL subfamily. Homodimer. The cofactor is pyridoxal 5'-phosphate.

The protein localises to the cytoplasm. The enzyme catalyses (S)-4-amino-5-oxopentanoate = 5-aminolevulinate. It participates in porphyrin-containing compound metabolism; protoporphyrin-IX biosynthesis; 5-aminolevulinate from L-glutamyl-tRNA(Glu): step 2/2. The protein is Glutamate-1-semialdehyde 2,1-aminomutase of Magnetococcus marinus (strain ATCC BAA-1437 / JCM 17883 / MC-1).